We begin with the raw amino-acid sequence, 428 residues long: Enolase (428 aa).

Position 163 (Gln-163) interacts with (2R)-2-phosphoglycerate. Glu-205 serves as the catalytic Proton donor. 3 residues coordinate Mg(2+): Asp-242, Glu-283, and Asp-310. Residues Lys-335, Arg-364, Ser-365, and Lys-386 each contribute to the (2R)-2-phosphoglycerate site. Lys-335 (proton acceptor) is an active-site residue.

It belongs to the enolase family. Mg(2+) is required as a cofactor.

The protein localises to the cytoplasm. Its subcellular location is the secreted. The protein resides in the cell surface. The catalysed reaction is (2R)-2-phosphoglycerate = phosphoenolpyruvate + H2O. It participates in carbohydrate degradation; glycolysis; pyruvate from D-glyceraldehyde 3-phosphate: step 4/5. Functionally, catalyzes the reversible conversion of 2-phosphoglycerate (2-PG) into phosphoenolpyruvate (PEP). It is essential for the degradation of carbohydrates via glycolysis. This is Enolase from Sulfurihydrogenibium sp. (strain YO3AOP1).